Consider the following 524-residue polypeptide: Nuclear distribution protein PAC1 (524 aa).

Positions 65 to 90 (STVLRLQRKIIDLENEVGTLRSIVDG) form a coiled coil. 8 WD repeats span residues 121 to 160 (QQNQLVMASVIHPVLPVIFGGCSDGSIIVWNIVNDDTSIP), 166 to 217 (AHTR…HIRT), 220 to 262 (GHDH…KSFT), 277 to 317 (NSQL…GLAL), 353 to 394 (IPQE…LIPH), 415 to 454 (GHQSWVKAIAIHPNGRFIFSGSDDKTIKVWDLANLNVTGS), 463 to 492 (GHDGFINDLDFAAFNRDSGKEDKIKEDATE), and 493 to 524 (EESHQQLMKFIEGRMRCLFISGAADNSIKLWS).

This sequence belongs to the WD repeat LIS1/nudF family. In terms of assembly, self-associates. Interacts with NDL1 and dynein.

The protein localises to the cytoplasm. Its subcellular location is the cytoskeleton. It localises to the spindle pole. Its function is as follows. Positively regulates the activity of the minus-end directed microtubule motor protein dynein. Plays a central role in positioning the mitotic spindle at the bud neck during cell division. Targets cytoplasmic dynein to microtubule plus ends, thereby promoting dynein-mediated microtubule sliding along the bud cortex and consequently the movement of the mitotic spindle to the bud neck. In Scheffersomyces stipitis (strain ATCC 58785 / CBS 6054 / NBRC 10063 / NRRL Y-11545) (Yeast), this protein is Nuclear distribution protein PAC1.